Consider the following 135-residue polypeptide: Small ribosomal subunit protein uS11 (135 aa).

This sequence belongs to the universal ribosomal protein uS11 family. As to quaternary structure, part of the 30S ribosomal subunit. Interacts with proteins S7 and S18. Binds to IF-3.

In terms of biological role, located on the platform of the 30S subunit, it bridges several disparate RNA helices of the 16S rRNA. Forms part of the Shine-Dalgarno cleft in the 70S ribosome. The sequence is that of Small ribosomal subunit protein uS11 from Corynebacterium urealyticum (strain ATCC 43042 / DSM 7109).